A 1359-amino-acid polypeptide reads, in one-letter code: Regulatory-associated protein of TOR 2 (1359 aa).

Disordered stretches follow at residues 17–64 and 782–819; these read SSAA…PQVA and SDNSATARDGRISTSSPIATNSIMHGSPQSDDSSQHSD. Residues 32 to 50 show a composition bias toward basic and acidic residues; that stretch reads HLVDDHLPVENGPDPRRDV. Residues 782-805 show a composition bias toward polar residues; that stretch reads SDNSATARDGRISTSSPIATNSIM. A compositionally biased stretch (low complexity) spans 806–819; the sequence is HGSPQSDDSSQHSD. WD repeat units lie at residues 1041–1080, 1087–1127, 1139–1178, 1181–1221, 1228–1269, 1273–1312, and 1321–1359; these read RFELGTKASLLLPFSPIVVAADENEQIRVWNYDDALPVNT, SDRG…GGQK, RSAGRSIVFDWQQQSGYLYASGDMSSILVWDLDKEQVNTI, TADS…RLVY, PRSE…EPYL, AHRGSLTALAVHRHAPVIASGSAKQMIKVFSLEGEQLTII, and QRIGSVNCLSFHRYKSLLAAGAGDNALVSIYAEDNYQVR.

Belongs to the WD repeat RAPTOR family. In terms of assembly, the target of rapamycin complex 1 (TORC1) is composed of at least RAPTOR, LST8 and TOR.

Its function is as follows. Component of TORC1 complex, which is an essential cell growth regulator that controls plant development. Acts by recruiting substrates for TOR. Acts by activating transcription, protein synthesis and ribosome biogenesis, and inhibiting mRNA degradation and autophagy. This chain is Regulatory-associated protein of TOR 2 (RAPTOR2), found in Oryza sativa subsp. japonica (Rice).